Reading from the N-terminus, the 363-residue chain is Peptide chain release factor 1 (363 aa).

Gln-237 carries the post-translational modification N5-methylglutamine. The span at 284 to 296 (EDEKRRSAEESTR) shows a compositional bias: basic and acidic residues. A disordered region spans residues 284 to 305 (EDEKRRSAEESTRRSLVASGDR).

It belongs to the prokaryotic/mitochondrial release factor family. Methylated by PrmC. Methylation increases the termination efficiency of RF1.

Its subcellular location is the cytoplasm. Functionally, peptide chain release factor 1 directs the termination of translation in response to the peptide chain termination codons UAG and UAA. This Shewanella baltica (strain OS195) protein is Peptide chain release factor 1.